Here is a 201-residue protein sequence, read N- to C-terminus: 3-isopropylmalate dehydratase small subunit (201 aa).

Belongs to the LeuD family. LeuD type 1 subfamily. In terms of assembly, heterodimer of LeuC and LeuD.

The catalysed reaction is (2R,3S)-3-isopropylmalate = (2S)-2-isopropylmalate. It participates in amino-acid biosynthesis; L-leucine biosynthesis; L-leucine from 3-methyl-2-oxobutanoate: step 2/4. Catalyzes the isomerization between 2-isopropylmalate and 3-isopropylmalate, via the formation of 2-isopropylmaleate. The chain is 3-isopropylmalate dehydratase small subunit from Paracoccus denitrificans (strain Pd 1222).